The sequence spans 1141 residues: Serine-aspartate repeat-containing protein E (1141 aa).

An N-terminal signal peptide occupies residues methionine 1–alanine 52. A YSIRK-G/S signaling motif motif is present at residues phenylalanine 23–serine 34. The ligand binding A region stretch occupies residues alanine 53–lysine 601. The segment at glutamate 54–proline 248 is disordered. Positions alanine 61 to valine 75 are enriched in basic and acidic residues. Low complexity predominate over residues glutamate 77–asparagine 90. The span at isoleucine 92 to serine 108 shows a compositional bias: basic and acidic residues. Low complexity predominate over residues threonine 109–threonine 126. The span at asparagine 130–threonine 145 shows a compositional bias: basic and acidic residues. Residues asparagine 159–threonine 207 show a composition bias toward polar residues. The span at serine 216 to threonine 241 shows a compositional bias: basic and acidic residues. 3 CNA-B domains span residues leucine 602–proline 714, lysine 715–proline 824, and lysine 825–threonine 935. A disordered region spans residues glycine 929–alanine 1117. A compositionally biased stretch (acidic residues) spans tyrosine 930–serine 1080. The LPXTG sorting signal signature appears at leucine 1104–glycine 1108. Threonine 1107 carries the pentaglycyl murein peptidoglycan amidated threonine modification. Positions glycine 1108–lysine 1141 are cleaved as a propeptide — removed by sortase.

Belongs to the serine-aspartate repeat-containing protein (SDr) family. In terms of assembly, interacts with host complement factor H/CFAH (via C-terminus). Interacts with host complement regulator C4BPA.

Its subcellular location is the secreted. It localises to the cell wall. Its function is as follows. Cell surface-associated calcium-binding protein which plays an important role in adhesion and pathogenesis. Contributes to the resistance to killing by innate immune components in blood and thus attenuates bacterial clearance by interacting with host complement factor H/CFAH and modulating its activity. Inhibits also bacterial opsonization and killing by interacting with host complement regulator C4BPA and thus inhibiting classical complement pathway activation. The protein is Serine-aspartate repeat-containing protein E (sdrE) of Staphylococcus aureus (strain Mu50 / ATCC 700699).